The sequence spans 321 residues: HPr kinase/phosphorylase (321 aa).

Catalysis depends on residues His143 and Lys164. 158–165 (GKSGVGKS) provides a ligand contact to ATP. Ser165 contributes to the Mg(2+) binding site. Residue Asp182 is the Proton acceptor; for phosphorylation activity. Proton donor; for dephosphorylation activity of the active site. The tract at residues 206–215 (MEIRGLGILN) is important for the catalytic mechanism of both phosphorylation and dephosphorylation. Glu207 provides a ligand contact to Mg(2+). Arg248 is an active-site residue. Positions 269–274 (PVRPGR) are important for the catalytic mechanism of dephosphorylation.

It belongs to the HPrK/P family. As to quaternary structure, homohexamer. Mg(2+) serves as cofactor.

The enzyme catalyses [HPr protein]-L-serine + ATP = [HPr protein]-O-phospho-L-serine + ADP + H(+). It catalyses the reaction [HPr protein]-O-phospho-L-serine + phosphate + H(+) = [HPr protein]-L-serine + diphosphate. Functionally, catalyzes the ATP- as well as the pyrophosphate-dependent phosphorylation of a specific serine residue in HPr, a phosphocarrier protein of the phosphoenolpyruvate-dependent sugar phosphotransferase system (PTS). HprK/P also catalyzes the pyrophosphate-producing, inorganic phosphate-dependent dephosphorylation (phosphorolysis) of seryl-phosphorylated HPr (P-Ser-HPr). This Leptospira interrogans serogroup Icterohaemorrhagiae serovar copenhageni (strain Fiocruz L1-130) protein is HPr kinase/phosphorylase.